Reading from the N-terminus, the 79-residue chain is MAGGRRGGRAKRRKVCFFTSNGITHIDYKDVDLLRKFVSERGKILPRRVTGTSAKYQRKLTLAIKKSRQMALLPYVTGE.

This sequence belongs to the bacterial ribosomal protein bS18 family. In terms of assembly, part of the 30S ribosomal subunit. Forms a tight heterodimer with protein bS6.

In terms of biological role, binds as a heterodimer with protein bS6 to the central domain of the 16S rRNA, where it helps stabilize the platform of the 30S subunit. The sequence is that of Small ribosomal subunit protein bS18 from Bacillus pumilus (strain SAFR-032).